An 87-amino-acid chain; its full sequence is Phosphoribosyl-ATP pyrophosphatase (87 aa).

It belongs to the PRA-PH family.

Its subcellular location is the cytoplasm. The enzyme catalyses 1-(5-phospho-beta-D-ribosyl)-ATP + H2O = 1-(5-phospho-beta-D-ribosyl)-5'-AMP + diphosphate + H(+). It functions in the pathway amino-acid biosynthesis; L-histidine biosynthesis; L-histidine from 5-phospho-alpha-D-ribose 1-diphosphate: step 2/9. The chain is Phosphoribosyl-ATP pyrophosphatase from Leifsonia xyli subsp. xyli (strain CTCB07).